We begin with the raw amino-acid sequence, 131 residues long: Global transcriptional regulator Spx 2 (131 aa).

Cysteines 10 and 13 form a disulfide.

It belongs to the ArsC family. Spx subfamily. In terms of assembly, interacts with the C-terminal domain of the alpha subunit of the RNAP.

It is found in the cytoplasm. Global transcriptional regulator that plays a key role in stress response and exerts either positive or negative regulation of genes. Acts by interacting with the C-terminal domain of the alpha subunit of the RNA polymerase (RNAP). This interaction can enhance binding of RNAP to the promoter region of target genes and stimulate their transcription, or block interaction of RNAP with activator. This Bacillus anthracis protein is Global transcriptional regulator Spx 2.